Reading from the N-terminus, the 428-residue chain is 3-phosphoshikimate 1-carboxyvinyltransferase (428 aa).

3 residues coordinate 3-phosphoshikimate: Lys22, Ser23, and Arg27. Lys22 contacts phosphoenolpyruvate. The phosphoenolpyruvate site is built by Gly96 and Arg124. Ser169, Ser170, Gln171, Ser197, Asp313, Asn336, and Lys340 together coordinate 3-phosphoshikimate. Position 171 (Gln171) interacts with phosphoenolpyruvate. Asp313 (proton acceptor) is an active-site residue. Phosphoenolpyruvate-binding residues include Arg344, Arg386, and Lys411.

This sequence belongs to the EPSP synthase family. Monomer.

It is found in the cytoplasm. The enzyme catalyses 3-phosphoshikimate + phosphoenolpyruvate = 5-O-(1-carboxyvinyl)-3-phosphoshikimate + phosphate. Its pathway is metabolic intermediate biosynthesis; chorismate biosynthesis; chorismate from D-erythrose 4-phosphate and phosphoenolpyruvate: step 6/7. In terms of biological role, catalyzes the transfer of the enolpyruvyl moiety of phosphoenolpyruvate (PEP) to the 5-hydroxyl of shikimate-3-phosphate (S3P) to produce enolpyruvyl shikimate-3-phosphate and inorganic phosphate. The protein is 3-phosphoshikimate 1-carboxyvinyltransferase of Photorhabdus laumondii subsp. laumondii (strain DSM 15139 / CIP 105565 / TT01) (Photorhabdus luminescens subsp. laumondii).